The following is a 389-amino-acid chain: Homoserine O-acetyltransferase (389 aa).

The tract at residues 1-21 is disordered; sequence MAALRAGKTNNEADQPSSPVL. Positions 8–18 are enriched in polar residues; it reads KTNNEADQPSS. An AB hydrolase-1 domain is found at 56–366; the sequence is NAILVCHALT…DRGHDAFLLD (311 aa). Residue S161 is the Nucleophile of the active site. Residue R231 participates in substrate binding. Residues D327 and H360 contribute to the active site. D361 is a binding site for substrate.

Belongs to the AB hydrolase superfamily. MetX family. Homodimer.

Its subcellular location is the cytoplasm. It carries out the reaction L-homoserine + acetyl-CoA = O-acetyl-L-homoserine + CoA. It participates in amino-acid biosynthesis; L-methionine biosynthesis via de novo pathway; O-acetyl-L-homoserine from L-homoserine: step 1/1. Transfers an acetyl group from acetyl-CoA to L-homoserine, forming acetyl-L-homoserine. The protein is Homoserine O-acetyltransferase of Mesorhizobium japonicum (strain LMG 29417 / CECT 9101 / MAFF 303099) (Mesorhizobium loti (strain MAFF 303099)).